A 772-amino-acid chain; its full sequence is Mitochondrial intermediate peptidase (772 aa).

The transit peptide at 1–37 (MLRTIILKAGSNASIPSPSRQNKLLRFFATAGAVSRT) directs the protein to the mitochondrion. Histidine 558 is a binding site for Zn(2+). The active site involves glutamate 559. The Zn(2+) site is built by histidine 562 and glutamate 587.

Belongs to the peptidase M3 family. Zn(2+) serves as cofactor.

Its subcellular location is the mitochondrion matrix. The catalysed reaction is Release of an N-terminal octapeptide as second stage of processing of some proteins imported into the mitochondrion.. Its activity is regulated as follows. Stimulated by Fe(2+). Its function is as follows. Cleaves proteins, imported into the mitochondrion, to their mature size. While most mitochondrial precursor proteins are processed to the mature form in one step by mitochondrial processing peptidase (MPP), the sequential cleavage by MIP of an octapeptide after initial processing by MPP is a required step for a subgroup of nuclear-encoded precursor proteins destined for the matrix or the inner membrane. Cleaves precursor proteins of respiratory components, including subunits of the electron transport chain and tricarboxylic acid cycle enzymes, and components of the mitochondrial genetic machinery, including ribosomal proteins, translation factors, and proteins required for mitochondrial DNA metabolism. The polypeptide is Mitochondrial intermediate peptidase (OCT1) (Saccharomyces cerevisiae (strain ATCC 204508 / S288c) (Baker's yeast)).